The sequence spans 274 residues: Non-homologous end joining protein Ku (274 aa).

Positions 11–195 (ITFGLVNVPV…KYKITPKELS (185 aa)) constitute a Ku domain.

This sequence belongs to the prokaryotic Ku family. As to quaternary structure, homodimer. Interacts with LigD.

Its function is as follows. With LigD forms a non-homologous end joining (NHEJ) DNA repair enzyme, which repairs dsDNA breaks with reduced fidelity. Binds linear dsDNA with 5'- and 3'- overhangs but not closed circular dsDNA nor ssDNA. Recruits and stimulates the ligase activity of LigD. This chain is Non-homologous end joining protein Ku, found in Coxiella burnetii (strain RSA 331 / Henzerling II).